We begin with the raw amino-acid sequence, 632 residues long: MASSKKSKTHKKKKEVKSPIDLPNSKKPTRALSEQPSASETQSVSNKSRKSKFGKRLNFILGAILGICGAFFFAVGDDNAVFDPATLDKFGNMLGSSDLFDDIKGYLSYNVFKDAPFTTDKPSQSPSGNEVQVGLDMYNEGYRSDHPVIMVPGVISSGLESWSFNNCSIPYFRKRLWGSWSMLKAMFLDKQCWLEHLMLDKKTGLDPKGIKLRAAQGFEAADFFITGYWIWSKVIENLAAIGYEPNNMLSASYDWRLSYANLEERDKYFSKLKMFIEYSNIVHKKKVVLISHSMGSQVTYYFFKWVEAEGYGNGGPTWVNDHIEAFINISGSLIGAPKTVAALLSGEMKDTAQLNQFSVYGLEKFFSRSERAMMVRTMGGVSSMLPKGGDVVWGNASWAPDDLNQTNFSNGAIIRYREDIDKDHDEFDIDDALQFLKNVTDDDFKVMLAKNYSHGLAWTEKEVLKNNEMPSKWINPLETSLPYAPDMKIYCVHGVGKPTERGYYYTNNPEGQPVIDSSVNDGTKVENGIVMDDGDGTLPILALGLVCNKVWQTKRFNPANTSITNYEIKHEPAAFDLRGGPRSAEHVDILGHSELNEIILKVSSGHGDSVPNRYISDIQEIINEINLDKPRN.

A compositionally biased stretch (basic residues) spans 1–15; sequence MASSKKSKTHKKKKE. Residues 1-47 form a disordered region; the sequence is MASSKKSKTHKKKKEVKSPIDLPNSKKPTRALSEQPSASETQSVSNK. Over 1–56 the chain is Cytoplasmic; sequence MASSKKSKTHKKKKEVKSPIDLPNSKKPTRALSEQPSASETQSVSNKSRKSKFGKR. The span at 32-46 shows a compositional bias: polar residues; sequence LSEQPSASETQSVSN. Residues 57 to 77 form a helical membrane-spanning segment; it reads LNFILGAILGICGAFFFAVGD. Residues 78 to 632 are Lumenal-facing; it reads DNAVFDPATL…NEINLDKPRN (555 aa). Asp136 is a substrate binding site. Ser293 serves as the catalytic Acyl-ester intermediate. Residue Met294 coordinates substrate. Residues Asp535 and His586 each act as charge relay system in the active site.

Belongs to the AB hydrolase superfamily. Lipase family.

The protein resides in the endoplasmic reticulum membrane. The catalysed reaction is a glycerophospholipid + a 1,2-diacyl-sn-glycerol = a monoacylglycerophospholipid + a triacyl-sn-glycerol. Its pathway is glycerolipid metabolism; triacylglycerol biosynthesis. Its function is as follows. Catalyzes triacylglycerol (TAG) formation by an acyl-CoA independent pathway. The enzyme specifically transfers acyl groups from the sn-2 position of a phospholipid to diacylglycerol (DAG), thus forming an sn-1-lysophospholipid. Plays a major role in triacylglycerol formation at log phase. Involved in lipid particle synthesis from the endoplasmic reticulum, promoting localized TAG production at discrete ER subdomains. This Schizosaccharomyces pombe (strain 972 / ATCC 24843) (Fission yeast) protein is Phospholipid:diacylglycerol acyltransferase (plh1).